The sequence spans 765 residues: Protein PAT1 homolog 1 (765 aa).

3 disordered regions span residues 1-98, 119-147, and 210-244; these read MFRF…DERG, GVGS…LAGP, and LPNR…SPPV. The segment covering 7–30 has biased composition (acidic residues); that stretch reads LDDDCTLEEEEGLVEEEDEIDQFN. Positions 45–59 are enriched in basic and acidic residues; that stretch reads EEHTRLAELDERVRD. Residues 218–227 show a composition bias toward basic and acidic residues; it reads SRDEGRDLSE. Serine 235 and serine 236 each carry phosphoserine. Low complexity predominate over residues 235 to 244; sequence SSPVIGSPPV.

Belongs to the PAT1 family. Interacts with ribonucleoprotein complex components.

The protein resides in the cytoplasm. The protein localises to the P-body. It is found in the nucleus. Its subcellular location is the PML body. It localises to the nucleus speckle. Its function is as follows. RNA-binding protein involved in deadenylation-dependent decapping of mRNAs, leading to the degradation of mRNAs. Acts as a scaffold protein that connects deadenylation and decapping machinery. Required for cytoplasmic mRNA processing body (P-body) assembly. The polypeptide is Protein PAT1 homolog 1 (patl1) (Danio rerio (Zebrafish)).